A 351-amino-acid chain; its full sequence is UDP-3-O-acylglucosamine N-acyltransferase (351 aa).

The active-site Proton acceptor is His240.

Belongs to the transferase hexapeptide repeat family. LpxD subfamily. Homotrimer.

It catalyses the reaction a UDP-3-O-[(3R)-3-hydroxyacyl]-alpha-D-glucosamine + a (3R)-hydroxyacyl-[ACP] = a UDP-2-N,3-O-bis[(3R)-3-hydroxyacyl]-alpha-D-glucosamine + holo-[ACP] + H(+). Its pathway is bacterial outer membrane biogenesis; LPS lipid A biosynthesis. In terms of biological role, catalyzes the N-acylation of UDP-3-O-acylglucosamine using 3-hydroxyacyl-ACP as the acyl donor. Is involved in the biosynthesis of lipid A, a phosphorylated glycolipid that anchors the lipopolysaccharide to the outer membrane of the cell. This Ectopseudomonas mendocina (strain ymp) (Pseudomonas mendocina) protein is UDP-3-O-acylglucosamine N-acyltransferase.